A 337-amino-acid polypeptide reads, in one-letter code: uncharacterized protein (337 aa).

At 1 to 10 the chain is on the cytoplasmic side; that stretch reads MKLKINIRPN. A helical transmembrane segment spans residues 11–31; sequence EIIFLICIVVIFSFSYTLTYF. Residues 32 to 100 lie on the Extracellular side of the membrane; the sequence is DSPIFKEHYI…LEKLFSFSDN (69 aa). The helical transmembrane segment at 101–121 threads the bilayer; sequence ILIVLIIVQVIVGFLIFLLSV. At 122–197 the chain is on the cytoplasmic side; sequence EKLSKCNYQL…KILIIKKKRD (76 aa). The segment covering 148–167 has biased composition (low complexity); sequence NNNNEDINNNNNNNNNNNNK. The disordered stretch occupies residues 148–179; that stretch reads NNNNEDINNNNNNNNNNNNKNKNDERNNEEIE. A helical transmembrane segment spans residues 198–218; it reads ILLAIIIFFLVLLGVLTIIYV. Residues 219 to 285 are Extracellular-facing; that stretch reads SFIPLNIRKA…SWSLDSGLFN (67 aa). Residues 286-306 form a helical membrane-spanning segment; the sequence is VKIVFFSTILIEFLTGCLILL. Over 307–337 the chain is Cytoplasmic; that stretch reads MKFKKDPNIVPLTKPSIASPTQIPHLFCIAK.

It is found in the membrane. This is an uncharacterized protein from Dictyostelium discoideum (Social amoeba).